The chain runs to 335 residues: GTPase Obg (335 aa).

Positions 1-158 (MFVDQITLEL…RQVELELKLI (158 aa)) constitute an Obg domain. Positions 126–145 (NTFFKTSVNRAPTKATPGKP) are disordered. The OBG-type G domain maps to 159-334 (ADIGLVGFPN…LYRFFTQRLA (176 aa)). GTP contacts are provided by residues 165–172 (GFPNAGKS), 190–194 (FTTLA), 215–218 (DIPG), 285–288 (NKID), and 315–317 (SGL). S172 and T192 together coordinate Mg(2+).

This sequence belongs to the TRAFAC class OBG-HflX-like GTPase superfamily. OBG GTPase family. In terms of assembly, monomer. Mg(2+) serves as cofactor.

It localises to the cytoplasm. In terms of biological role, an essential GTPase which binds GTP, GDP and possibly (p)ppGpp with moderate affinity, with high nucleotide exchange rates and a fairly low GTP hydrolysis rate. Plays a role in control of the cell cycle, stress response, ribosome biogenesis and in those bacteria that undergo differentiation, in morphogenesis control. The sequence is that of GTPase Obg from Chlamydia pneumoniae (Chlamydophila pneumoniae).